Reading from the N-terminus, the 1022-residue chain is Probable beta-galactosidase B (1022 aa).

The first 20 residues, 1–20 (MARFPQLLFLLLASIGLLSA), serve as a signal peptide directing secretion. N23 carries N-linked (GlcNAc...) asparagine glycosylation. A substrate-binding site is contributed by Y90. N100 carries an N-linked (GlcNAc...) asparagine glycan. Substrate is bound by residues N135, A136, E137, and N195. E196 functions as the Proton donor in the catalytic mechanism. N211 is a glycosylation site (N-linked (GlcNAc...) asparagine). Y265 serves as a coordination point for substrate. An intrachain disulfide couples C271 to C324. E308 (nucleophile) is an active-site residue. Position 373 (Y373) interacts with substrate. Residues N411, N456, N541, N554, N626, N777, N790, N832, N880, and N881 are each glycosylated (N-linked (GlcNAc...) asparagine).

It belongs to the glycosyl hydrolase 35 family.

The protein localises to the secreted. It carries out the reaction Hydrolysis of terminal non-reducing beta-D-galactose residues in beta-D-galactosides.. Cleaves beta-linked terminal galactosyl residues from gangliosides, glycoproteins, and glycosaminoglycans. This is Probable beta-galactosidase B (lacB) from Aspergillus terreus (strain NIH 2624 / FGSC A1156).